The chain runs to 274 residues: 3-methyl-2-oxobutanoate hydroxymethyltransferase (274 aa).

Mg(2+) contacts are provided by D44 and D83. Residues 44-45, D83, and K113 each bind 3-methyl-2-oxobutanoate; that span reads DS. Residue E115 participates in Mg(2+) binding. The active-site Proton acceptor is the E182.

It belongs to the PanB family. As to quaternary structure, homodecamer; pentamer of dimers. Requires Mg(2+) as cofactor.

It localises to the cytoplasm. The enzyme catalyses 3-methyl-2-oxobutanoate + (6R)-5,10-methylene-5,6,7,8-tetrahydrofolate + H2O = 2-dehydropantoate + (6S)-5,6,7,8-tetrahydrofolate. It functions in the pathway cofactor biosynthesis; (R)-pantothenate biosynthesis; (R)-pantoate from 3-methyl-2-oxobutanoate: step 1/2. Catalyzes the reversible reaction in which hydroxymethyl group from 5,10-methylenetetrahydrofolate is transferred onto alpha-ketoisovalerate to form ketopantoate. In Campylobacter jejuni subsp. jejuni serotype O:23/36 (strain 81-176), this protein is 3-methyl-2-oxobutanoate hydroxymethyltransferase.